The chain runs to 324 residues: Quinolinate synthase (324 aa).

Positions 39 and 56 each coordinate iminosuccinate. Cys-101 contributes to the [4Fe-4S] cluster binding site. Iminosuccinate-binding positions include 127–129 (YIN) and Ser-144. A [4Fe-4S] cluster-binding site is contributed by Cys-187. Iminosuccinate contacts are provided by residues 213–215 (HPE) and Thr-230. Residue Cys-280 coordinates [4Fe-4S] cluster.

This sequence belongs to the quinolinate synthase family. Type 2 subfamily. The cofactor is [4Fe-4S] cluster.

The protein localises to the cytoplasm. The catalysed reaction is iminosuccinate + dihydroxyacetone phosphate = quinolinate + phosphate + 2 H2O + H(+). Its pathway is cofactor biosynthesis; NAD(+) biosynthesis; quinolinate from iminoaspartate: step 1/1. In terms of biological role, catalyzes the condensation of iminoaspartate with dihydroxyacetone phosphate to form quinolinate. The sequence is that of Quinolinate synthase from Nostoc punctiforme (strain ATCC 29133 / PCC 73102).